The sequence spans 165 residues: Interferon gamma (165 aa).

The N-terminal stretch at 1–23 (MKYTSYILAFQLCIVLGSLGCYC) is a signal peptide. Gln24 is subject to Pyrrolidone carboxylic acid. N-linked (GlcNAc...) asparagine glycosylation is found at Asn48 and Asn120.

This sequence belongs to the type II (or gamma) interferon family. Homodimer. Interacts with IFNGR1 (via extracellular domain); this interaction promotes IFNGR1 dimerization.

The protein localises to the secreted. Type II interferon produced by immune cells such as T-cells and NK cells that plays crucial roles in antimicrobial, antiviral, and antitumor responses by activating effector immune cells and enhancing antigen presentation. Primarily signals through the JAK-STAT pathway after interaction with its receptor IFNGR1 to affect gene regulation. Upon IFNG binding, IFNGR1 intracellular domain opens out to allow association of downstream signaling components JAK2, JAK1 and STAT1, leading to STAT1 activation, nuclear translocation and transcription of IFNG-regulated genes. Many of the induced genes are transcription factors such as IRF1 that are able to further drive regulation of a next wave of transcription. Plays a role in class I antigen presentation pathway by inducing a replacement of catalytic proteasome subunits with immunoproteasome subunits. In turn, increases the quantity, quality, and repertoire of peptides for class I MHC loading. Increases the efficiency of peptide generation also by inducing the expression of activator PA28 that associates with the proteasome and alters its proteolytic cleavage preference. Up-regulates as well MHC II complexes on the cell surface by promoting expression of several key molecules such as cathepsins B/CTSB, H/CTSH, and L/CTSL. Participates in the regulation of hematopoietic stem cells during development and under homeostatic conditions by affecting their development, quiescence, and differentiation. This is Interferon gamma (IFNG) from Papio anubis (Olive baboon).